Reading from the N-terminus, the 196-residue chain is ATP-dependent Clp protease proteolytic subunit (196 aa).

Residue Ser98 is the Nucleophile of the active site. His123 is an active-site residue.

Belongs to the peptidase S14 family. Fourteen ClpP subunits assemble into 2 heptameric rings which stack back to back to give a disk-like structure with a central cavity, resembling the structure of eukaryotic proteasomes.

The protein localises to the cytoplasm. It carries out the reaction Hydrolysis of proteins to small peptides in the presence of ATP and magnesium. alpha-casein is the usual test substrate. In the absence of ATP, only oligopeptides shorter than five residues are hydrolyzed (such as succinyl-Leu-Tyr-|-NHMec, and Leu-Tyr-Leu-|-Tyr-Trp, in which cleavage of the -Tyr-|-Leu- and -Tyr-|-Trp bonds also occurs).. Cleaves peptides in various proteins in a process that requires ATP hydrolysis. Has a chymotrypsin-like activity. Plays a major role in the degradation of misfolded proteins. The protein is ATP-dependent Clp protease proteolytic subunit of Lactiplantibacillus plantarum (strain ATCC BAA-793 / NCIMB 8826 / WCFS1) (Lactobacillus plantarum).